The following is a 169-amino-acid chain: NAD(P)H-quinone oxidoreductase subunit J, chloroplastic (169 aa).

It belongs to the complex I 30 kDa subunit family. As to quaternary structure, NDH is composed of at least 16 different subunits, 5 of which are encoded in the nucleus.

Its subcellular location is the plastid. It localises to the chloroplast thylakoid membrane. It carries out the reaction a plastoquinone + NADH + (n+1) H(+)(in) = a plastoquinol + NAD(+) + n H(+)(out). The catalysed reaction is a plastoquinone + NADPH + (n+1) H(+)(in) = a plastoquinol + NADP(+) + n H(+)(out). Its function is as follows. NDH shuttles electrons from NAD(P)H:plastoquinone, via FMN and iron-sulfur (Fe-S) centers, to quinones in the photosynthetic chain and possibly in a chloroplast respiratory chain. The immediate electron acceptor for the enzyme in this species is believed to be plastoquinone. Couples the redox reaction to proton translocation, and thus conserves the redox energy in a proton gradient. This chain is NAD(P)H-quinone oxidoreductase subunit J, chloroplastic, found in Marchantia polymorpha (Common liverwort).